Here is a 323-residue protein sequence, read N- to C-terminus: Aldo-keto reductase family 1 member C18 (323 aa).

Residues 20–24 and Asp50 each bind NADP(+); that span reads GFGTY. The active-site Proton donor is Tyr55. Substrate is bound at residue His117. NADP(+) contacts are provided by residues 166–167, Gln190, 216–221, and 270–280; these read SN, YGALGT, and KSFNEERIREN.

This sequence belongs to the aldo/keto reductase family. As to quaternary structure, monomer.

The protein localises to the cytoplasm. It catalyses the reaction (17R,20S)-17,20-dihydroxypregn-4-en-3-one + NADP(+) = 17alpha-hydroxyprogesterone + NADPH + H(+). It carries out the reaction (17R,20S)-17,20-dihydroxypregn-4-en-3-one + NAD(+) = 17alpha-hydroxyprogesterone + NADH + H(+). In terms of biological role, catalyzes the conversion of progesterone into 20-alpha-dihydroprogesterone (20 alpha-OHP). In Mus musculus (Mouse), this protein is Aldo-keto reductase family 1 member C18 (Akr1c18).